The primary structure comprises 701 residues: Elongation factor G (701 aa).

The tr-type G domain maps to 11-287 (TKVRNIGIMA…AVIDYLPSPL (277 aa)). GTP contacts are provided by residues 20-27 (AHIDAGKT), 84-88 (DTPGH), and 138-141 (NKMD).

This sequence belongs to the TRAFAC class translation factor GTPase superfamily. Classic translation factor GTPase family. EF-G/EF-2 subfamily.

It is found in the cytoplasm. In terms of biological role, catalyzes the GTP-dependent ribosomal translocation step during translation elongation. During this step, the ribosome changes from the pre-translocational (PRE) to the post-translocational (POST) state as the newly formed A-site-bound peptidyl-tRNA and P-site-bound deacylated tRNA move to the P and E sites, respectively. Catalyzes the coordinated movement of the two tRNA molecules, the mRNA and conformational changes in the ribosome. This is Elongation factor G from Mycobacterium ulcerans (strain Agy99).